The following is a 267-amino-acid chain: 2-keto-3-deoxy-L-rhamnonate aldolase (267 aa).

His49 functions as the Proton acceptor in the catalytic mechanism. Residue Gln151 coordinates substrate. Glu153 contributes to the Mg(2+) binding site. Substrate-binding residues include Ala178 and Asp179. Position 179 (Asp179) interacts with Mg(2+).

The protein belongs to the HpcH/HpaI aldolase family. KDR aldolase subfamily. In terms of assembly, homohexamer. Mg(2+) is required as a cofactor.

It carries out the reaction 2-dehydro-3-deoxy-L-rhamnonate = (S)-lactaldehyde + pyruvate. Its function is as follows. Catalyzes the reversible retro-aldol cleavage of 2-keto-3-deoxy-L-rhamnonate (KDR) to pyruvate and lactaldehyde. This is 2-keto-3-deoxy-L-rhamnonate aldolase from Salmonella gallinarum (strain 287/91 / NCTC 13346).